Here is a 559-residue protein sequence, read N- to C-terminus: DNA ligase (559 aa).

Glutamate 247 contributes to the ATP binding site. Residue lysine 249 is the N6-AMP-lysine intermediate of the active site. The ATP site is built by arginine 254, arginine 269, glutamate 299, phenylalanine 339, arginine 414, and lysine 420.

Belongs to the ATP-dependent DNA ligase family. Requires Mg(2+) as cofactor.

It carries out the reaction ATP + (deoxyribonucleotide)n-3'-hydroxyl + 5'-phospho-(deoxyribonucleotide)m = (deoxyribonucleotide)n+m + AMP + diphosphate.. The enzyme catalyses NAD(+) + (deoxyribonucleotide)n-3'-hydroxyl + 5'-phospho-(deoxyribonucleotide)m = (deoxyribonucleotide)n+m + AMP + beta-nicotinamide D-nucleotide.. In terms of biological role, DNA ligase that seals nicks in double-stranded DNA during DNA replication, DNA recombination and DNA repair. Shows high activity with either ATP or NAD(+). The protein is DNA ligase of Thermococcus fumicolans.